The primary structure comprises 611 residues: Poly(3-hydroxyalkanoate) polymerase subunit PhaC (611 aa).

Cysteine 349 is a catalytic residue.

The protein belongs to the PHA/PHB synthase family. Type I PhaC subfamily. As to quaternary structure, monomer.

The protein resides in the cytoplasm. It catalyses the reaction (3R)-3-hydroxybutanoyl-CoA + [(3R)-hydroxybutanoate](n) = [(3R)-hydroxybutanoate](n+1) + CoA. The protein operates within biopolymer metabolism; poly-(R)-3-hydroxybutanoate biosynthesis. In terms of biological role, polymerizes D(-)-3-hydroxybutyryl-CoA to create PHB which consists of thousands of hydroxybutyrate molecules linked end to end. PHB serves as an intracellular energy reserve material when cells grow under conditions of nutrient limitation. This Rhizobium meliloti (strain 1021) (Ensifer meliloti) protein is Poly(3-hydroxyalkanoate) polymerase subunit PhaC.